The following is a 217-amino-acid chain: Cytidylate kinase (217 aa).

9–17 (GPAGAGKST) lines the ATP pocket.

It belongs to the cytidylate kinase family. Type 1 subfamily.

The protein localises to the cytoplasm. It carries out the reaction CMP + ATP = CDP + ADP. The catalysed reaction is dCMP + ATP = dCDP + ADP. In Clostridium acetobutylicum (strain ATCC 824 / DSM 792 / JCM 1419 / IAM 19013 / LMG 5710 / NBRC 13948 / NRRL B-527 / VKM B-1787 / 2291 / W), this protein is Cytidylate kinase.